We begin with the raw amino-acid sequence, 146 residues long: Anti-sigma F factor (146 aa).

Belongs to the anti-sigma-factor family.

The enzyme catalyses L-seryl-[protein] + ATP = O-phospho-L-seryl-[protein] + ADP + H(+). It carries out the reaction L-threonyl-[protein] + ATP = O-phospho-L-threonyl-[protein] + ADP + H(+). Its function is as follows. Binds to sigma F and blocks its ability to form an RNA polymerase holoenzyme (E-sigma F). Phosphorylates SpoIIAA on a serine residue. This phosphorylation may enable SpoIIAA to act as an anti-anti-sigma factor that counteracts SpoIIAB and thus releases sigma F from inhibition. The protein is Anti-sigma F factor of Oceanobacillus iheyensis (strain DSM 14371 / CIP 107618 / JCM 11309 / KCTC 3954 / HTE831).